The primary structure comprises 237 residues: MTAALSSEISLHPLLDNLPSSASTTTKQEEPSLPALPITLICHCPPSSSPGPIKVTLTNQILHNHACGCSKCWKPSGALFSVVGVVPSSGLSVIANAEKLEVVDENATIQRWKCKECGVHLYGRIEKQHPFRGLDFVHGELALGQSGGSEGEGENEGGGLGEGKVEFAAFVSSIIEGGFEPHAHANGDEGKGGNIKQVRDRLREIFGEKVYDCLSPSLMDVIAEWEGRRSGKLKAVL.

Residues 38-152 form the CENP-V/GFA domain; it reads ITLICHCPPS…LGQSGGSEGE (115 aa). Residues Cys-42, Cys-44, Cys-67, Cys-69, Cys-72, Cys-114, and Cys-117 each contribute to the Zn(2+) site.

This sequence belongs to the Gfa family. Zn(2+) is required as a cofactor.

The enzyme catalyses S-(hydroxymethyl)glutathione = glutathione + formaldehyde. It functions in the pathway one-carbon metabolism; formaldehyde degradation; formate from formaldehyde (glutathione route): step 1/3. Its function is as follows. Catalyzes the condensation of formaldehyde and glutathione to S-hydroxymethylglutathione. The sequence is that of Putative glutathione-dependent formaldehyde-activating enzyme from Sordaria macrospora (strain ATCC MYA-333 / DSM 997 / K(L3346) / K-hell).